A 145-amino-acid chain; its full sequence is 3-hydroxyacyl-[acyl-carrier-protein] dehydratase FabZ (145 aa).

Residue histidine 47 is part of the active site.

The protein belongs to the thioester dehydratase family. FabZ subfamily.

It localises to the cytoplasm. It catalyses the reaction a (3R)-hydroxyacyl-[ACP] = a (2E)-enoyl-[ACP] + H2O. Its function is as follows. Involved in unsaturated fatty acids biosynthesis. Catalyzes the dehydration of short chain beta-hydroxyacyl-ACPs and long chain saturated and unsaturated beta-hydroxyacyl-ACPs. The sequence is that of 3-hydroxyacyl-[acyl-carrier-protein] dehydratase FabZ from Polaromonas naphthalenivorans (strain CJ2).